The sequence spans 420 residues: Histidine--tRNA ligase (420 aa).

It belongs to the class-II aminoacyl-tRNA synthetase family. Homodimer.

The protein localises to the cytoplasm. It catalyses the reaction tRNA(His) + L-histidine + ATP = L-histidyl-tRNA(His) + AMP + diphosphate + H(+). This is Histidine--tRNA ligase from Acholeplasma laidlawii (strain PG-8A).